A 420-amino-acid chain; its full sequence is Homeobox-containing protein 1 (420 aa).

An HNF-p1 domain is found at D18 to T49. Positions E56–A139 are disordered. K60 participates in a covalent cross-link: Glycyl lysine isopeptide (Lys-Gly) (interchain with G-Cter in SUMO2). Composition is skewed to low complexity over residues R64 to G73 and A81 to Q93. A compositionally biased stretch (polar residues) spans H94 to M132. Residue K131 forms a Glycyl lysine isopeptide (Lys-Gly) (interchain with G-Cter in SUMO2) linkage. A POU-specific atypical domain is found at R145–A241. S148 is modified (phosphoserine). K161 is covalently cross-linked (Glycyl lysine isopeptide (Lys-Gly) (interchain with G-Cter in SUMO2)). S170 carries the phosphoserine modification. Residues K174, K217, and K310 each participate in a glycyl lysine isopeptide (Lys-Gly) (interchain with G-Cter in SUMO2) cross-link. A DNA-binding region (homeobox) is located at residues R267–A341. The disordered stretch occupies residues I353–Q385. Acidic residues predominate over residues D365 to D377. K413 participates in a covalent cross-link: Glycyl lysine isopeptide (Lys-Gly) (interchain with G-Cter in SUMO1); alternate. A Glycyl lysine isopeptide (Lys-Gly) (interchain with G-Cter in SUMO2); alternate cross-link involves residue K413.

In terms of assembly, associates with the telomerase holoenzyme complex. Interacts with DKC1, XRCC6 and COIL. In terms of tissue distribution, ubiquitous. Detected in pancreas, brain, spleen, placenta, prostate, thymus, liver, heart, bone marrow, skeletal muscle, stomach, uterus, testis, kidney, ovary, colon, lung, cardiac muscle and thyroid gland.

The protein resides in the nucleus. It localises to the cytoplasm. It is found in the chromosome. Its subcellular location is the telomere. The protein localises to the cajal body. The protein resides in the PML body. Its function is as follows. Binds directly to 5'-TTAGGG-3' repeats in telomeric DNA. Associates with the telomerase complex at sites of active telomere processing and positively regulates telomere elongation. Important for TERT binding to chromatin, indicating a role in recruitment of the telomerase complex to telomeres. Also plays a role in the alternative lengthening of telomeres (ALT) pathway in telomerase-negative cells where it promotes formation and/or maintenance of ALT-associated promyelocytic leukemia bodies (APBs). Enhances formation of telomere C-circles in ALT cells, suggesting a possible role in telomere recombination. Might also be involved in the DNA damage response at telomeres. This Homo sapiens (Human) protein is Homeobox-containing protein 1.